Consider the following 557-residue polypeptide: Urocanate hydratase (557 aa).

NAD(+)-binding positions include 52–53, Q130, 176–178, E196, R201, 242–243, 263–267, 273–274, and Y322; these read GG, GMG, NA, QTSAH, and YL. C410 is an active-site residue. An NAD(+)-binding site is contributed by G492.

Belongs to the urocanase family. NAD(+) is required as a cofactor.

It is found in the cytoplasm. It carries out the reaction 4-imidazolone-5-propanoate = trans-urocanate + H2O. It functions in the pathway amino-acid degradation; L-histidine degradation into L-glutamate; N-formimidoyl-L-glutamate from L-histidine: step 2/3. Its function is as follows. Catalyzes the conversion of urocanate to 4-imidazolone-5-propionate. In Pseudoalteromonas translucida (strain TAC 125), this protein is Urocanate hydratase.